A 103-amino-acid polypeptide reads, in one-letter code: Small ribosomal subunit protein uS10 (103 aa).

The protein belongs to the universal ribosomal protein uS10 family. Part of the 30S ribosomal subunit.

Involved in the binding of tRNA to the ribosomes. This chain is Small ribosomal subunit protein uS10, found in Bordetella petrii (strain ATCC BAA-461 / DSM 12804 / CCUG 43448).